The following is a 950-amino-acid chain: Protocadherin alpha-6 (950 aa).

The N-terminal stretch at 1–29 is a signal peptide; that stretch reads MVFTPEDRLGKQCLLLPLLLLAAWKVGSG. The Extracellular portion of the chain corresponds to 30 to 697; sequence QLHYSVPEEA…GPEAALVDVN (668 aa). 6 Cadherin domains span residues 34–133, 157–242, 243–350, 351–455, 456–565, and 581–678; these read SVPE…PPLF, ASDA…APTF, EQSE…VPEI, ALTS…APAF, AQPE…APAL, and VPRS…APKA. Residues asparagine 257, asparagine 265, asparagine 386, and asparagine 548 are each glycosylated (N-linked (GlcNAc...) asparagine). The chain crosses the membrane as a helical span at residues 698-718; sequence VYLIIAICAVSSLLVLTLLLY. Over 719 to 950 the chain is Cytoplasmic; it reads TALRCSAPPT…GNSTTDNSDQ (232 aa). PXXP repeat units lie at residues 799-802, 832-835, 873-876, and 891-894; these read PRQP, PGGP, PGNP, and PGSP. Positions 799–894 are 4 X 4 AA repeats of P-X-X-P; that stretch reads PRQPNPDWRY…PDKFIIPGSP (96 aa). The tract at residues 830 to 950 is disordered; that stretch reads AGPGGPDQQW…GNSTTDNSDQ (121 aa). Residues 909–923 are compositionally biased toward basic and acidic residues; the sequence is DKSDFITFGKKEETK.

It is found in the cell membrane. Its subcellular location is the secreted. In terms of biological role, potential calcium-dependent cell-adhesion protein. May be involved in the establishment and maintenance of specific neuronal connections in the brain. The sequence is that of Protocadherin alpha-6 (PCDHA6) from Homo sapiens (Human).